The sequence spans 79 residues: CDC42 small effector protein 1-A (79 aa).

2 S-palmitoyl cysteine lipidation sites follow: C10 and C11. The 14-residue stretch at 30-43 (IGEPMNFVHLTHVG) folds into the CRIB domain.

It belongs to the CDC42SE/SPEC family.

The protein resides in the cytoplasm. It localises to the cytoskeleton. It is found in the cell membrane. Probably involved in the organization of the actin cytoskeleton by acting downstream of CDC42, inducing actin filament assembly. This is CDC42 small effector protein 1-A (cdc42se1-a) from Xenopus laevis (African clawed frog).